The sequence spans 129 residues: MVAEAGASIQAEDVNNDPFRVDQLILDYDYMLYRIKDHVASIHLATTELCRKQNQLVCTGIVEEIIDSNIKNVRELLTKCKELETYFEQLHAIDGIVSTFHERMDEIVKQYRDIKVHTDSASRDHVATK.

This sequence belongs to the BLOC1S4 family. In terms of assembly, component of the biogenesis of lysosome-related organelles complex-1 (BLOC-1).

It localises to the cytoplasm. In terms of biological role, component of the biogenesis of lysosome-related organelles complex-1 (BLOC-1), a complex that is involved in endosomal cargo sorting. This is Biogenesis of lysosome-related organelles complex 1 subunit CNL1 (CLN1) from Eremothecium gossypii (strain ATCC 10895 / CBS 109.51 / FGSC 9923 / NRRL Y-1056) (Yeast).